We begin with the raw amino-acid sequence, 338 residues long: Glycerol-3-phosphate dehydrogenase [NAD(P)+] (338 aa).

NADPH contacts are provided by serine 13, tryptophan 14, and lysine 108. 3 residues coordinate sn-glycerol 3-phosphate: lysine 108, glycine 139, and serine 141. Alanine 143 serves as a coordination point for NADPH. 5 residues coordinate sn-glycerol 3-phosphate: lysine 194, aspartate 247, serine 257, arginine 258, and asparagine 259. Lysine 194 (proton acceptor) is an active-site residue. Residue arginine 258 participates in NADPH binding. NADPH is bound by residues valine 282 and glutamate 284.

Its subcellular location is the cytoplasm. It carries out the reaction sn-glycerol 3-phosphate + NAD(+) = dihydroxyacetone phosphate + NADH + H(+). It catalyses the reaction sn-glycerol 3-phosphate + NADP(+) = dihydroxyacetone phosphate + NADPH + H(+). It participates in membrane lipid metabolism; glycerophospholipid metabolism. In terms of biological role, catalyzes the reduction of the glycolytic intermediate dihydroxyacetone phosphate (DHAP) to sn-glycerol 3-phosphate (G3P), the key precursor for phospholipid synthesis. The chain is Glycerol-3-phosphate dehydrogenase [NAD(P)+] from Streptococcus pyogenes serotype M6 (strain ATCC BAA-946 / MGAS10394).